The primary structure comprises 397 residues: LIM/homeobox protein Lhx9 (397 aa).

2 LIM zinc-binding domains span residues 69 to 130 (ALCA…RFSV) and 131 to 193 (QRCA…LLQG). Disordered stretches follow at residues 248–272 (ENEA…RMRT) and 330–364 (ENGG…TLTD). A DNA-binding region (homeobox) is located at residues 267–326 (TKRMRTSFKHHQLRTMKSYFAINHNPDAKDLKQLAQKTGLTKRVLQVWFQNARAKFRRNL).

As to quaternary structure, interacts with LDB1 and LDB2.

It localises to the nucleus. Its function is as follows. Involved in gonadal development. This chain is LIM/homeobox protein Lhx9 (LHX9), found in Bos taurus (Bovine).